The following is a 1098-amino-acid chain: Probable arabinosyltransferase B (1098 aa).

12 helical membrane passes run 28 to 50 (WVAT…LPVV), 217 to 239 (LKLL…LWRL), 271 to 293 (ASWR…WHVI), 402 to 419 (LRPE…YVLI), 434 to 456 (AVVT…AALV), 472 to 494 (LVGT…TVVF), 541 to 558 (FGFL…FIML), 570 to 587 (PAWR…FLMF), 597 to 619 (GLFA…PSVL), 626 to 648 (MAFL…GWWY), 663 to 685 (IDGI…YAAW), and 698 to 720 (LIRA…VFVA).

This sequence belongs to the emb family.

It is found in the cell membrane. Arabinosyl transferase responsible for the polymerization of arabinose into the arabinan of arabinogalactan. This chain is Probable arabinosyltransferase B (embB), found in Mycobacterium tuberculosis (strain CDC 1551 / Oshkosh).